A 305-amino-acid chain; its full sequence is Glycine--tRNA ligase alpha subunit (305 aa).

The protein belongs to the class-II aminoacyl-tRNA synthetase family. As to quaternary structure, tetramer of two alpha and two beta subunits.

Its subcellular location is the cytoplasm. It carries out the reaction tRNA(Gly) + glycine + ATP = glycyl-tRNA(Gly) + AMP + diphosphate. In Janthinobacterium sp. (strain Marseille) (Minibacterium massiliensis), this protein is Glycine--tRNA ligase alpha subunit.